A 319-amino-acid chain; its full sequence is Thiamine-monophosphate kinase (319 aa).

The Mg(2+) site is built by Asp28, Thr43, Thr44, and Asp45. His52 is a substrate binding site. Residue Asp73 coordinates Mg(2+). Residues Tyr104, 121–122, and Arg145 contribute to the ATP site; that span reads GD. Asp122 is a Mg(2+) binding site. Mg(2+) is bound at residue Asp218. Ser220 lines the ATP pocket. Asp221 serves as a coordination point for Mg(2+). Glu268 and Tyr315 together coordinate substrate.

Belongs to the thiamine-monophosphate kinase family.

It carries out the reaction thiamine phosphate + ATP = thiamine diphosphate + ADP. The protein operates within cofactor biosynthesis; thiamine diphosphate biosynthesis; thiamine diphosphate from thiamine phosphate: step 1/1. Catalyzes the ATP-dependent phosphorylation of thiamine-monophosphate (TMP) to form thiamine-pyrophosphate (TPP), the active form of vitamin B1. This Methanocaldococcus jannaschii (strain ATCC 43067 / DSM 2661 / JAL-1 / JCM 10045 / NBRC 100440) (Methanococcus jannaschii) protein is Thiamine-monophosphate kinase.